The primary structure comprises 1285 residues: Peroxidasin homolog pxn-1 (1285 aa).

Residues methionine 1 to glycine 20 form the signal peptide. Positions leucine 21–asparagine 53 constitute an LRRNT domain. LRR repeat units follow at residues cysteine 27 to asparagine 49, isoleucine 50 to leucine 72, glutamate 73 to leucine 96, aspartate 97 to serine 120, serine 122 to leucine 143, tyrosine 145 to aspartate 168, and lysine 204 to threonine 227. An N-linked (GlcNAc...) asparagine glycan is attached at asparagine 49. The LRRCT domain maps to serine 180–cysteine 228. N-linked (GlcNAc...) asparagine glycosylation occurs at asparagine 248. Residues arginine 305–asparagine 324 form a disordered region. A compositionally biased stretch (polar residues) spans serine 307–phenylalanine 317. Ig-like C2-type domains follow at residues proline 315–aspartate 401 and proline 408–threonine 495. 2 disulfides stabilise this stretch: cysteine 336–cysteine 385 and cysteine 429–cysteine 479. Residues glutamine 508–leucine 550 are a coiled coil. Asparagine 595 carries N-linked (GlcNAc...) asparagine glycosylation. Cysteine 625 and cysteine 641 are oxidised to a cystine. Aspartate 719 is a heme b binding site. The active-site Proton acceptor is the histidine 720. Aspartate 721 is a binding site for Ca(2+). Cystine bridges form between cysteine 740/cysteine 750 and cysteine 744/cysteine 771. The N-linked (GlcNAc...) asparagine glycan is linked to asparagine 741. Threonine 803, phenylalanine 805, aspartate 807, and serine 809 together coordinate Ca(2+). N-linked (GlcNAc...) asparagine glycosylation is present at asparagine 858. The heme b site is built by glutamate 877 and histidine 973. LRR repeat units follow at residues histidine 998–alanine 1022 and valine 1049–arginine 1073. Intrachain disulfides connect cysteine 1076–cysteine 1133 and cysteine 1174–cysteine 1201. An LRR 12 repeat occupies threonine 1168 to methionine 1189.

Belongs to the peroxidase family. XPO subfamily. Ca(2+) is required as a cofactor. Heme b serves as cofactor. As to expression, expressed in the ventral nerve cord, the dorsal nerve cord, head neurons, GABAergic and cholinergic neurons, body wall muscles, vulval muscles, uterine muscles, intestine, the hypodermis and in coelomocytes.

It localises to the secreted. It is found in the extracellular space. Its subcellular location is the extracellular matrix. The enzyme catalyses L-lysyl-[collagen] + L-methionyl-[collagen] + H2O2 = [collagen]-L-lysyl-N-S-L-methionyl-[collagen] + 2 H2O + H(+). It carries out the reaction bromide + H2O2 = hypobromite + H2O. The catalysed reaction is L-lysyl-[collagen] + L-methionyl-[collagen] + hypobromite = [collagen]-L-lysyl-N-S-L-methionyl-[collagen] + bromide + H2O + H(+). It catalyses the reaction L-tyrosyl-[protein] + bromide + H2O2 + H(+) = 3-bromo-L-tyrosyl-[protein] + 2 H2O. The enzyme catalyses hypobromite + L-tyrosyl-[protein] + H(+) = 3-bromo-L-tyrosyl-[protein] + H2O. Catalyzes the two-electron oxidation of bromide by hydrogen peroxide and generates hypobromite as a reactive intermediate which mediates the formation of sulfilimine cross-links between methionine and hydroxylysine residues within an uncross-linked collagen IV NC1 hexamer. Plays a role in the attachment of tissues and in axonal guidance during early developmental stages. May functionally antagonize the peroxidasin pxn-2 to maintain neuronal development. The polypeptide is Peroxidasin homolog pxn-1 (Caenorhabditis elegans).